A 397-amino-acid polypeptide reads, in one-letter code: Nuclear pore complex-interacting protein family member B2 (397 aa).

Residues 256 to 397 are disordered; it reads NRMGHQPPPP…KLRTGHCTQA (142 aa). A compositionally biased stretch (polar residues) spans 267-277; it reads QQHSITDNSLS. Residues 278–287 show a composition bias toward low complexity; the sequence is LKTPPECLLT. Basic residues predominate over residues 382-391; the sequence is KRRRLSKLRT.

Belongs to the NPIP family.

The protein resides in the nucleus. The sequence is that of Nuclear pore complex-interacting protein family member B2 from Homo sapiens (Human).